Consider the following 133-residue polypeptide: Protein U17 (133 aa).

The chain crosses the membrane as a helical span at residues 82-102 (FVSVLWCVILVFVVKIKLFFL).

Its subcellular location is the membrane. The polypeptide is Protein U17 (U17/U16) (Homo sapiens (Human)).